Here is a 245-residue protein sequence, read N- to C-terminus: Probable phosphatase YPTB2019 (245 aa).

Residues H7, H9, H15, H40, E73, H101, H131, D192, and H194 each coordinate Zn(2+).

This sequence belongs to the PHP family. In terms of assembly, homotrimer. Zn(2+) is required as a cofactor.

This chain is Probable phosphatase YPTB2019, found in Yersinia pseudotuberculosis serotype I (strain IP32953).